A 42-amino-acid chain; its full sequence is Aryl-alcohol dehydrogenase (42 aa).

It belongs to the zinc-containing alcohol dehydrogenase family. In terms of assembly, homodimer. Requires Zn(2+) as cofactor.

It carries out the reaction an aromatic primary alcohol + NAD(+) = an aromatic aldehyde + NADH + H(+). Oxidizes primary alcohols with an aromatic or cyclohex-1-ene ring. It is highly specific for benzyl alcohol. The protein is Aryl-alcohol dehydrogenase of Acinetobacter guillouiae (Acinetobacter genomosp. 11).